The primary structure comprises 119 residues: Short coiled-coil protein A (119 aa).

A compositionally biased stretch (acidic residues) spans 1-10 (MEGDVDEDDG). The segment at 1-26 (MEGDVDEDDGTFTNISLADDSADGEP) is disordered. Positions 48 to 95 (MENQVEQEEKTRLINQVLELQHTLEDLSARVDAVKEENLKLKSENQVL) form a coiled coil.

The protein belongs to the SCOC family.

Its subcellular location is the golgi apparatus membrane. The protein resides in the golgi apparatus. It localises to the trans-Golgi network. It is found in the cytoplasm. The protein localises to the cytosol. In terms of biological role, positive regulator of amino acid starvation-induced autophagy. This Danio rerio (Zebrafish) protein is Short coiled-coil protein A (scoca).